The primary structure comprises 493 residues: Serine/threonine-protein kinase 3 (493 aa).

The Protein kinase domain occupies Phe26–Ile277. ATP is bound by residues Leu32 to Val40 and Lys55. Asp145 (proton acceptor) is an active-site residue. A Phosphothreonine; by autocatalysis modification is found at Thr179. A coiled-coil region spans residues Leu286 to Lys327. Disordered stretches follow at residues Glu303–Met336 and Asp369–Gln414. The span at Leu308 to Leu320 shows a compositional bias: acidic residues. A compositionally biased stretch (polar residues) spans Met325–Met336. Acidic residues predominate over residues Asp369 to Asp378. The segment covering Tyr398–Asp410 has biased composition (basic and acidic residues). Positions Phe439 to Lys486 constitute an SARAH domain. A coiled-coil region spans residues Asn444–Gln477.

The protein belongs to the protein kinase superfamily. STE Ser/Thr protein kinase family. STE20 subfamily. Homodimer; mediated via the coiled-coil region. Mg(2+) is required as a cofactor.

It localises to the cytoplasm. Its subcellular location is the nucleus. It carries out the reaction L-seryl-[protein] + ATP = O-phospho-L-seryl-[protein] + ADP + H(+). The catalysed reaction is L-threonyl-[protein] + ATP = O-phospho-L-threonyl-[protein] + ADP + H(+). With respect to regulation, inhibited by the C-terminal non-catalytic region. Activated by caspase-cleavage. Full activation also requires homodimerization and autophosphorylation of Thr-179. Its function is as follows. Stress-activated, pro-apoptotic kinase which, following caspase-cleavage, enters the nucleus and induces chromatin condensation followed by internucleosomal DNA fragmentation. Key component of the Hippo signaling pathway which plays a pivotal role in organ size control and tumor suppression by restricting proliferation and promoting apoptosis. The core of this pathway is composed of a kinase cascade wherein stk3/mst2 and stk4/mst1, in complex with its regulatory protein sav1, phosphorylates and activates lats1/2 in complex with its regulatory protein mob1, which in turn phosphorylates and inactivates yap1 oncoprotein and wwtr1/taz. Phosphorylation of yap1 by lats2 inhibits its translocation into the nucleus to regulate cellular genes important for cell proliferation, cell death, and cell migration. The chain is Serine/threonine-protein kinase 3 (stk3) from Xenopus laevis (African clawed frog).